The chain runs to 506 residues: ATP synthase subunit alpha (506 aa).

170–177 (GDRQTGKT) contributes to the ATP binding site.

Belongs to the ATPase alpha/beta chains family. F-type ATPases have 2 components, CF(1) - the catalytic core - and CF(0) - the membrane proton channel. CF(1) has five subunits: alpha(3), beta(3), gamma(1), delta(1), epsilon(1). CF(0) has four main subunits: a(1), b(1), b'(1) and c(9-12).

The protein resides in the cellular thylakoid membrane. The catalysed reaction is ATP + H2O + 4 H(+)(in) = ADP + phosphate + 5 H(+)(out). Its function is as follows. Produces ATP from ADP in the presence of a proton gradient across the membrane. The alpha chain is a regulatory subunit. The protein is ATP synthase subunit alpha of Synechococcus sp. (strain WH7803).